We begin with the raw amino-acid sequence, 152 residues long: UPF0178 protein KPN78578_03210 (152 aa).

It belongs to the UPF0178 family.

This is UPF0178 protein KPN78578_03210 from Klebsiella pneumoniae subsp. pneumoniae (strain ATCC 700721 / MGH 78578).